The sequence spans 257 residues: MGRVIRAQRKGAGSVFKAHVKHRKGAAKLRHIDFAERHGYIKGIVKDIIHDPGRGTPLAKVVFRDPYRFKKRTELFIAAEGIHTGQFVFCGKKAQLNIGNVLPVGVMPEGTIICCLEEKPGDRGKLARASGNYATVISHNPETKKSRVKLPSGAKKVISSTNRAVVGVVAGGGRIDKPILKAGRAYHKYKVKRNCWPRVRGVAMNPVEHPFGGGNHQHIGKPSTIRRDVPAGRKVGLIAARRTGRLRGTKTVQEKEN.

The segment at 207 to 226 (VEHPFGGGNHQHIGKPSTIR) is disordered.

Belongs to the universal ribosomal protein uL2 family. As to quaternary structure, component of the large ribosomal subunit.

The protein resides in the cytoplasm. Its function is as follows. Component of the large ribosomal subunit. The ribosome is a large ribonucleoprotein complex responsible for the synthesis of proteins in the cell. This is Large ribosomal subunit protein uL2 (rpl8) from Ictalurus punctatus (Channel catfish).